The primary structure comprises 125 residues: Fluoride-specific ion channel FluC (125 aa).

4 consecutive transmembrane segments (helical) span residues 1–21 (MIQAFLVALGGAIGSVLRYYV), 32–52 (AFPWGTLAVNVVGCFVIGVFA), 68–88 (LLITGFLGGFTTFSAFSLDAI), and 101–121 (IYIAASVGLSMAAVISGLAVM). The Na(+) site is built by glycine 75 and threonine 78.

This sequence belongs to the fluoride channel Fluc/FEX (TC 1.A.43) family.

The protein resides in the cell inner membrane. The enzyme catalyses fluoride(in) = fluoride(out). With respect to regulation, na(+) is not transported, but it plays an essential structural role and its presence is essential for fluoride channel function. Its function is as follows. Fluoride-specific ion channel. Important for reducing fluoride concentration in the cell, thus reducing its toxicity. This is Fluoride-specific ion channel FluC from Rhizobium etli (strain CIAT 652).